A 105-amino-acid polypeptide reads, in one-letter code: Venom metalloprotease inhibitor (105 aa).

Residues 1 to 21 form the signal peptide; sequence MFRFVCVLFIALVVFCTTTSA. 5 disulfide bridges follow: Cys26–Cys61, Cys35–Cys57, Cys39–Cys50, Cys43–Cys83, and Cys63–Cys77. Positions 26 to 83 constitute a TIL domain; sequence CNRPNEEYRCGSACQTTCATLGQRCPIMNIRCNDACYCKEGYARYGDDTGMCVSISQC.

The protein belongs to the serine protease inhibitor-like (TIL domain-containing) family. In terms of tissue distribution, expressed by the venom gland.

Its subcellular location is the secreted. Its function is as follows. Inhibits metalloprotease (human MMP3), trypsin, chymotrypsin, plasmin and microbial serine protease (proteinase K). Exhibits antifibrinolytic activity by binding plasmin and inhibiting it. Does not inhibit elastase, thrombin or microbial serine protease (subtilisin A). This is Venom metalloprotease inhibitor from Bombus ignitus (Bumblebee).